We begin with the raw amino-acid sequence, 314 residues long: 3'-5' exoribonuclease YhaM (314 aa).

Residues 163-279 (HVVSMLDLAK…LHYIDNLDAK (117 aa)) enclose the HD domain.

Belongs to the YhaM family.

Functionally, shows a 3'-5' exoribonuclease activity. The polypeptide is 3'-5' exoribonuclease YhaM (Bacillus mycoides (strain KBAB4) (Bacillus weihenstephanensis)).